A 307-amino-acid polypeptide reads, in one-letter code: Ornithine carbamoyltransferase (307 aa).

Carbamoyl phosphate contacts are provided by residues 54–57, Gln-81, Arg-105, and 132–135; these read STRT and HPCQ. L-ornithine-binding positions include Asn-163, Asp-221, and 225–226; that span reads SM. Residues 261–262 and Arg-289 contribute to the carbamoyl phosphate site; that span reads CL.

Belongs to the aspartate/ornithine carbamoyltransferase superfamily. OTCase family.

The protein resides in the cytoplasm. The enzyme catalyses carbamoyl phosphate + L-ornithine = L-citrulline + phosphate + H(+). It functions in the pathway amino-acid biosynthesis; L-arginine biosynthesis; L-arginine from L-ornithine and carbamoyl phosphate: step 1/3. Functionally, reversibly catalyzes the transfer of the carbamoyl group from carbamoyl phosphate (CP) to the N(epsilon) atom of ornithine (ORN) to produce L-citrulline. The chain is Ornithine carbamoyltransferase from Aromatoleum aromaticum (strain DSM 19018 / LMG 30748 / EbN1) (Azoarcus sp. (strain EbN1)).